The chain runs to 160 residues: H/ACA ribonucleoprotein complex subunit 2-like protein (160 aa).

It belongs to the eukaryotic ribosomal protein eL8 family. In terms of assembly, component of the small nucleolar ribonucleoprotein particle containing H/ACA-type snoRNAs (H/ACA snoRNPs).

It is found in the nucleus. The protein resides in the nucleolus. Its function is as follows. Required for ribosome biogenesis. Part of a complex which catalyzes pseudouridylation of rRNA. This involves the isomerization of uridine such that the ribose is subsequently attached to C5, instead of the normal N1. Pseudouridine ('psi') residues may serve to stabilize the conformation of rRNAs. The protein is H/ACA ribonucleoprotein complex subunit 2-like protein (NHP2) of Drosophila yakuba (Fruit fly).